The chain runs to 345 residues: Phosphate acyltransferase (345 aa).

The protein belongs to the PlsX family. As to quaternary structure, homodimer. Probably interacts with PlsY.

It is found in the cytoplasm. It carries out the reaction a fatty acyl-[ACP] + phosphate = an acyl phosphate + holo-[ACP]. The protein operates within lipid metabolism; phospholipid metabolism. Catalyzes the reversible formation of acyl-phosphate (acyl-PO(4)) from acyl-[acyl-carrier-protein] (acyl-ACP). This enzyme utilizes acyl-ACP as fatty acyl donor, but not acyl-CoA. The chain is Phosphate acyltransferase from Wolbachia pipientis subsp. Culex pipiens (strain wPip).